The sequence spans 343 residues: Mas-related G-protein coupled receptor member F (343 aa).

The Extracellular portion of the chain corresponds to 1–44; the sequence is MAGNCSWEAHPGNRNKMCPGLSEAPELYSRGFLTIEQIAMLPPP. Asn-4 carries an N-linked (GlcNAc...) asparagine glycan. Residues 45–66 traverse the membrane as a helical segment; the sequence is AVMNYIFLLLCLCGLVGNGLVL. At 67–82 the chain is on the cytoplasmic side; that stretch reads WFFGFSIKRNPFSIYF. A helical transmembrane segment spans residues 83-104; sequence LHLASADVGYLFSKAVFSILNT. Over 105–123 the chain is Extracellular; sequence GGFLGTFADYIRSVCRVLG. The helical transmembrane segment at 124–144 threads the bilayer; the sequence is LCMFLTGVSLLPAVSAERCAS. At 145–160 the chain is on the cytoplasmic side; the sequence is VIFPAWYWRRRPKRLS. Residues 161-181 traverse the membrane as a helical segment; the sequence is AVVCALLWVLSLLVTCLHNYF. The Extracellular segment spans residues 182-198; it reads CVFLGRGAPGAACRHMD. A helical membrane pass occupies residues 199 to 220; sequence IFLGILLFLLCCPLMVLPCLAL. Residues 221 to 241 are Cytoplasmic-facing; sequence ILHVECRARRRQRSAKLNHVI. Residues 242–263 traverse the membrane as a helical segment; it reads LAMVSVFLVSSIYLGIDWFLFW. At 264-273 the chain is on the extracellular side; the sequence is VFQIPAPFPE. A helical membrane pass occupies residues 274–294; it reads YVTDLCICINSSAKPIVYFLA. Residues 295–343 lie on the Cytoplasmic side of the membrane; the sequence is GRDKSQRLWEPLRVVFQRALRDGAELGEAGGSTPNTVTMEMQCPPGNAS. The segment at 320 to 343 is disordered; it reads LGEAGGSTPNTVTMEMQCPPGNAS.

This sequence belongs to the G-protein coupled receptor 1 family. Mas subfamily.

The protein resides in the cell membrane. Its function is as follows. Orphan receptor. May bind to a neuropeptide and may regulate nociceptor function and/or development, including the sensation or modulation of pain. The chain is Mas-related G-protein coupled receptor member F (MRGPRF) from Homo sapiens (Human).